The following is a 529-amino-acid chain: Nucleolar protein 58 (529 aa).

Threonine 34 is modified (phosphothreonine). Phosphoserine is present on serine 109. The tract at residues 155-400 is sufficient for interaction with NOPCHAP1; it reads ADKVDTMIVQ…LEARLRTLED (246 aa). Residue lysine 157 forms a Glycyl lysine isopeptide (Lys-Gly) (interchain with G-Cter in SUMO2) linkage. In terms of domain architecture, Nop spans 282-400; the sequence is IAPNVTVMVG…LEARLRTLED (119 aa). Serine 304 and serine 351 each carry phosphoserine. Glycyl lysine isopeptide (Lys-Gly) (interchain with G-Cter in SUMO2) cross-links involve residues lysine 353, lysine 411, lysine 415, lysine 422, lysine 426, lysine 441, lysine 444, and lysine 465. The interval 409 to 529 is disordered; the sequence is TGKALAKTEK…KKKKKRENED (121 aa). Basic and acidic residues predominate over residues 414 to 427; the sequence is AKTEKYEHKSEVKT. Lysine 467 is covalently cross-linked (Glycyl lysine isopeptide (Lys-Gly) (interchain with G-Cter in SUMO); alternate). Residue lysine 467 forms a Glycyl lysine isopeptide (Lys-Gly) (interchain with G-Cter in SUMO1); alternate linkage. Lysine 467 participates in a covalent cross-link: Glycyl lysine isopeptide (Lys-Gly) (interchain with G-Cter in SUMO2); alternate. Residues 469 to 481 show a composition bias toward acidic residues; it reads EEEEEEKVAEEEE. Serine 483 is subject to Phosphoserine. A Glycyl lysine isopeptide (Lys-Gly) (interchain with G-Cter in SUMO2) cross-link involves residue lysine 485. A compositionally biased stretch (basic residues) spans 485 to 495; it reads KKKKKRGKKKH. Lysine 497 is covalently cross-linked (Glycyl lysine isopeptide (Lys-Gly) (interchain with G-Cter in SUMO); alternate). Lysine 497 is covalently cross-linked (Glycyl lysine isopeptide (Lys-Gly) (interchain with G-Cter in SUMO2); alternate). Phosphoserine is present on residues serine 502 and serine 514. The span at 517 to 529 shows a compositional bias: basic residues; that stretch reads KKKKKKKKRENED.

It belongs to the NOP5/NOP56 family. Core component of box C/D small nucleolar ribonucleoprotein (snoRNP) particles; the core proteins SNU13, NOP56, NOP58 and FBL or FBLL1 assemble stepwise onto the snoRNA. Interacts with NOLC1/Nopp140. Interacts with NOPCHAP1, NUFIP1, RUVBL1 and RUVBL2; NOPCHAP1 bridges the association of NOP58 with RUVBL1:RUVBL2 and NUFIP1. Interacts with PIH1D1. Part of the small subunit (SSU) processome, composed of more than 70 proteins and the RNA chaperone small nucleolar RNA (snoRNA) U3. Post-translationally, sumoylation is essential for high-affinity binding to snoRNAs. In terms of tissue distribution, ubiquitous.

Its subcellular location is the nucleus. It localises to the nucleolus. The protein localises to the nucleoplasm. Its function is as follows. Required for the biogenesis of box C/D snoRNAs such as U3, U8 and U14 snoRNAs. Part of the small subunit (SSU) processome, first precursor of the small eukaryotic ribosomal subunit. During the assembly of the SSU processome in the nucleolus, many ribosome biogenesis factors, an RNA chaperone and ribosomal proteins associate with the nascent pre-rRNA and work in concert to generate RNA folding, modifications, rearrangements and cleavage as well as targeted degradation of pre-ribosomal RNA by the RNA exosome. Core component of box C/D small nucleolar ribonucleoprotein (snoRNP) complexes that function in methylation of multiple sites on ribosomal RNAs (rRNAs) and messenger RNAs (mRNAs). The polypeptide is Nucleolar protein 58 (Homo sapiens (Human)).